The chain runs to 152 residues: MGLSTLEQKLTELISAPVEALGYELVGIEFVRGRTSTLRIYIDSEDGINVDDCADVSHQVSAVMDVEDPITVAYNLEVSSPGLDRPMFTAEHYARFTGEEVSLVLRMAVQNRRKWQGIIKSVEGEMITVAVEGNDEVFALSNIQKANLVPHF.

Belongs to the RimP family.

The protein localises to the cytoplasm. Required for maturation of 30S ribosomal subunits. In Erwinia tasmaniensis (strain DSM 17950 / CFBP 7177 / CIP 109463 / NCPPB 4357 / Et1/99), this protein is Ribosome maturation factor RimP.